Here is a 312-residue protein sequence, read N- to C-terminus: DNA-directed RNA polymerase subunit alpha (312 aa).

The tract at residues 1 to 229 (MLQYQIDRIE…ELFQPLATVT (229 aa)) is alpha N-terminal domain (alpha-NTD). The tract at residues 236 to 312 (IEPEPSAEAQ…ISIPQSRTSV (77 aa)) is alpha C-terminal domain (alpha-CTD).

The protein belongs to the RNA polymerase alpha chain family. As to quaternary structure, in cyanobacteria the RNAP catalytic core is composed of 2 alpha, 1 beta, 1 beta', 1 gamma and 1 omega subunit. When a sigma factor is associated with the core the holoenzyme is formed, which can initiate transcription.

The catalysed reaction is RNA(n) + a ribonucleoside 5'-triphosphate = RNA(n+1) + diphosphate. DNA-dependent RNA polymerase catalyzes the transcription of DNA into RNA using the four ribonucleoside triphosphates as substrates. The sequence is that of DNA-directed RNA polymerase subunit alpha from Synechococcus sp. (strain CC9311).